Here is a 260-residue protein sequence, read N- to C-terminus: Vaa serine proteinase homolog 1 (260 aa).

The first 18 residues, 1–18 (MVLIRVLANLLVLQLSYA), serve as a signal peptide directing secretion. A propeptide spanning residues 19 to 24 (QKSSEL) is cleaved from the precursor. The Peptidase S1 domain occupies 25-251 (VIGGDECNIN…YTDWIQSIIA (227 aa)). Disulfide bonds link C31-C165, C52-C68, C100-C258, C144-C212, C176-C191, and C202-C227. N123 carries N-linked (GlcNAc...) asparagine glycosylation. The tract at residues 172 to 186 (DYSVCQKVYRKLPEK) is key residues for binding to FVIIIa. N253 carries N-linked (GlcNAc...) asparagine glycosylation.

This sequence belongs to the peptidase S1 family. Snake venom subfamily. N-glycosylated. The toxin exists in multiple glycoforms. As to expression, expressed by the venom gland.

Its subcellular location is the secreted. Its function is as follows. This is the first member of the serine protease family that has strong anticoagulant activity and lacks enzymatic activity. It inhibits activities of three blood coagulation complexes: (1) prothrombinase complex (composed of blood coagulation factors Va and Xa (F5 and F10)) (IC(50)=164.1 nM), (2) intrinsic tenase complex (composed of factors VIIIa and IXa (F8 and F9)), and (3) extrinsic tenase complex (composed of tissue factor and factor VIIa (F7)). The toxin also has been observed to bind prothrombin, factor FVa, non-activated and activated forms of factors FVII (F7) (FVII and FVIIa), factor FVIIIa (F8), factors FIX and FIXa (F9) and factors FX and FXa (F10). The toxin inhibits the activity of the intrinsic tenase complex mainly by competing with FIXa (F9) for binding to FVIIIa (F8). The protein is Vaa serine proteinase homolog 1 of Vipera ammodytes ammodytes (Western sand viper).